A 210-amino-acid polypeptide reads, in one-letter code: Tetraspanin-31 (210 aa).

Residues 1–12 are Cytoplasmic-facing; the sequence is MVCGGFACSKNA. The chain crosses the membrane as a helical span at residues 13 to 33; sequence LCALNVVYMLVSLLLIGVAAW. The Extracellular segment spans residues 34–44; the sequence is GKGLGLVSSIH. The helical transmembrane segment at 45–65 threads the bilayer; the sequence is IIGGVIAVGVFLLLIAVAGLV. Residues 66–72 are Cytoplasmic-facing; sequence GAVNHHQ. A helical membrane pass occupies residues 73–93; it reads VLLFFYMIILGLVFIFQFVIS. Residues 94-173 lie on the Extracellular side of the membrane; sequence CSCLAINRSK…FLKHSDEALK (80 aa). N-linked (GlcNAc...) asparagine glycosylation is found at N100, N109, N117, and N134. Residues 174–194 form a helical membrane-spanning segment; the sequence is ILGGVGLFFSFTEILGVWLAM. Residues 195 to 210 lie on the Cytoplasmic side of the membrane; it reads RFRNQKDPRANPSAFL.

It belongs to the tetraspanin (TM4SF) family.

Its subcellular location is the membrane. This Homo sapiens (Human) protein is Tetraspanin-31 (TSPAN31).